A 212-amino-acid polypeptide reads, in one-letter code: Thymidylate kinase (212 aa).

Position 10-17 (glycine 10–threonine 17) interacts with ATP.

This sequence belongs to the thymidylate kinase family.

It catalyses the reaction dTMP + ATP = dTDP + ADP. Functionally, phosphorylation of dTMP to form dTDP in both de novo and salvage pathways of dTTP synthesis. The chain is Thymidylate kinase from Yersinia enterocolitica serotype O:8 / biotype 1B (strain NCTC 13174 / 8081).